We begin with the raw amino-acid sequence, 220 residues long: MKTGALATFLALCLPVTVFATTLRLSNEVDLLVLDGKKVSSSLLRGAESIELENGPHQLVFRVEKTIRLPGNEERLYISPPLVISFDTQLISQVNFQLPRLENEREASYFNAAPRLALLDGDAMPIPVKLDILAITSTAKVVDYEIETERYNKSAKRASLPQFATMMADDSTLLSDVSELDTVPPQSQTLTEQRLKYWFRLADPQTRHHFLQWAEKQPPS.

A signal peptide spans 1–20 (MKTGALATFLALCLPVTVFA).

Belongs to the UPF0319 family.

This Salmonella agona (strain SL483) protein is UPF0319 protein YccT.